Consider the following 333-residue polypeptide: Autoinducer 2 import system permease protein LsrD (333 aa).

The next 10 membrane-spanning stretches (helical) occupy residues 7–27 (YGWE…FGLS), 45–65 (ICIG…GIDI), 67–87 (FGST…AGVP), 90–110 (VAIP…AGLI), 118–138 (LVIT…LSGL), 162–182 (LFGL…FWLL), 212–232 (TLCM…ILLV), 240–260 (SDLG…GGAN), 261–281 (IYGG…VGYL), and 288–308 (IGTP…LVVV).

This sequence belongs to the binding-protein-dependent transport system permease family. AraH/RbsC subfamily. In terms of assembly, the complex is composed of two ATP-binding proteins (LsrA), two transmembrane proteins (LsrC and LsrD) and a solute-binding protein (LsrB).

It localises to the cell inner membrane. In terms of biological role, part of the ABC transporter complex LsrABCD involved in autoinducer 2 (AI-2) import. Probably responsible for the translocation of the substrate across the membrane. The sequence is that of Autoinducer 2 import system permease protein LsrD (lsrD) from Yersinia pseudotuberculosis serotype IB (strain PB1/+).